The primary structure comprises 409 residues: Ubiquitin-associated domain-containing protein 1 (409 aa).

The residue at position 1 (M1) is an N-acetylmethionine. The Ubiquitin-like domain maps to 14–98; the sequence is LRLHICAADG…LLLIKKRVPS (85 aa). The segment at 101–122 is disordered; it reads PKMADVSAEEKKKQEQKAPDKD. Positions 108–122 are enriched in basic and acidic residues; it reads AEEKKKQEQKAPDKD. A UBA 1 domain is found at 187 to 231; that stretch reads DEDERVDETALRQLTEMGFPESRASKALRLNHMSVPQAMEWLIEH. The segment at 239-273 is disordered; the sequence is TPLPGHAAQAGASAAATTSSTSSEAAVGTSVEDEE. Low complexity predominate over residues 245-268; that stretch reads AAQAGASAAATTSSTSSEAAVGTS. The region spanning 292–332 is the UBA 2 domain; that stretch reads RADARAVISLMEMGFDEKEVIDALRVNNNQQNAACEWLLGD. Positions 357-396 constitute an STI1 domain; that stretch reads NPVVQLGLTNPKTLLAFEDMLENPLNSTQWMNDPETGPVM.

In terms of assembly, component of the KPC complex composed of RNF123/KPC1 and UBAC1/KPC2. Interacts (via ubiquitin-like domain) with RNF123. Interacts (via ubiquitin-like and UBA domains) with the proteasome via its N-terminal domain.

Its subcellular location is the cytoplasm. It participates in protein modification; protein ubiquitination. In terms of biological role, non-catalytic component of the KPC complex, a E3 ubiquitin-protein ligase complex that mediates polyubiquitination of target proteins, such as CDKN1B and NFKB1. The KPC complex catalyzes polyubiquitination and proteasome-mediated degradation of CDKN1B during G1 phase of the cell cycle. The KPC complex also acts as a key regulator of the NF-kappa-B signaling by promoting maturation of the NFKB1 component of NF-kappa-B by catalyzing ubiquitination of the NFKB1 p105 precursor. Within the KPC complex, UBAC1 acts as an adapter that promotes the transfer of target proteins that have been polyubiquitinated by RNF123/KPC1 to the 26S proteasome. This chain is Ubiquitin-associated domain-containing protein 1 (Ubac1), found in Mus musculus (Mouse).